Consider the following 352-residue polypeptide: S-norcoclaurine synthase 1 (352 aa).

A Fe2OG dioxygenase domain is found at 200 to 304; sequence KPLRTVFNRE…RLSIAAFHDP (105 aa). Fe cation is bound by residues His228, Asp230, and His285.

Belongs to the iron/ascorbate-dependent oxidoreductase family. As to quaternary structure, monomer. It depends on Fe cation as a cofactor.

The enzyme catalyses (4-hydroxyphenyl)acetaldehyde + dopamine = (S)-norcoclaurine + H2O. Its activity is regulated as follows. Inhibited by O-phenanthroline, but not by EDTA. Its function is as follows. Involved in the biosynthesis of the common precursor of all benzylisoquinoline alkaloids such as morphine, sanguinarine, codeine or berberine. Condenses dopamine and phenylacetaldehyde, 3,4-dihydrophenylacetaldehyde or 4-hydroxyphenylacetaldehyde. The protein is S-norcoclaurine synthase 1 (NCS1) of Coptis japonica (Japanese goldthread).